The following is a 983-amino-acid chain: Protein translocase subunit SecA (983 aa).

Residues glutamine 83, 101 to 105, and aspartate 489 each bind ATP; that span reads GEGKT. The disordered stretch occupies residues 948–983; that stretch reads ISSEEENNNEKTNININEDLERTKGEAQQTAKNPNE. Over residues 973–983 the composition is skewed to polar residues; the sequence is EAQQTAKNPNE.

The protein belongs to the SecA family. In terms of assembly, monomer and homodimer. Part of the essential Sec protein translocation apparatus which comprises SecA, SecYEG and auxiliary proteins SecDF. Other proteins may also be involved.

The protein localises to the cell membrane. It is found in the cytoplasm. It catalyses the reaction ATP + H2O + cellular proteinSide 1 = ADP + phosphate + cellular proteinSide 2.. Its function is as follows. Part of the Sec protein translocase complex. Interacts with the SecYEG preprotein conducting channel. Has a central role in coupling the hydrolysis of ATP to the transfer of proteins into and across the cell membrane, serving as an ATP-driven molecular motor driving the stepwise translocation of polypeptide chains across the membrane. This chain is Protein translocase subunit SecA, found in Mesomycoplasma hyopneumoniae (strain 7448) (Mycoplasma hyopneumoniae).